A 281-amino-acid polypeptide reads, in one-letter code: 2-C-methyl-D-erythritol 4-phosphate cytidylyltransferase (281 aa).

This sequence belongs to the IspD/TarI cytidylyltransferase family. IspD subfamily.

It carries out the reaction 2-C-methyl-D-erythritol 4-phosphate + CTP + H(+) = 4-CDP-2-C-methyl-D-erythritol + diphosphate. Its pathway is isoprenoid biosynthesis; isopentenyl diphosphate biosynthesis via DXP pathway; isopentenyl diphosphate from 1-deoxy-D-xylulose 5-phosphate: step 2/6. Catalyzes the formation of 4-diphosphocytidyl-2-C-methyl-D-erythritol from CTP and 2-C-methyl-D-erythritol 4-phosphate (MEP). The sequence is that of 2-C-methyl-D-erythritol 4-phosphate cytidylyltransferase from Psychrobacter arcticus (strain DSM 17307 / VKM B-2377 / 273-4).